Here is a 144-residue protein sequence, read N- to C-terminus: MLVPKRVKHRREHRGRMRGAAKGGKTVAFGEYGLQALTSSWITNRQIEAARVAMTRYMKRGGKVWIKIFPHKSYTSKGVGVRMGNGKGTPEGWVAPVKREKVMFEVAGVPEEVAREALRLAAMKLPVKTKIIEREEVGGESDEG.

The protein belongs to the universal ribosomal protein uL16 family. As to quaternary structure, part of the 50S ribosomal subunit.

Functionally, binds 23S rRNA and is also seen to make contacts with the A and possibly P site tRNAs. This chain is Large ribosomal subunit protein uL16, found in Pediococcus pentosaceus (strain ATCC 25745 / CCUG 21536 / LMG 10740 / 183-1w).